Consider the following 492-residue polypeptide: Trypanothione reductase (492 aa).

FAD is bound at residue 35 to 52; sequence DVQTHHGPPHYAALGGTC. Residues cysteine 52 and cysteine 57 are joined by a disulfide bond. Histidine 461 functions as the Proton acceptor in the catalytic mechanism.

The protein belongs to the class-I pyridine nucleotide-disulfide oxidoreductase family. As to quaternary structure, homodimer. FAD is required as a cofactor.

It is found in the cytoplasm. It catalyses the reaction trypanothione + NADP(+) = trypanothione disulfide + NADPH + H(+). Its function is as follows. Trypanothione is the parasite analog of glutathione; this enzyme is the equivalent of glutathione reductase. This chain is Trypanothione reductase (TPR), found in Trypanosoma brucei brucei.